We begin with the raw amino-acid sequence, 275 residues long: Bifunctional protein FolD (275 aa).

NADP(+) contacts are provided by residues 161–163, S186, and T227; that span reads GRS.

It belongs to the tetrahydrofolate dehydrogenase/cyclohydrolase family. In terms of assembly, homodimer.

The enzyme catalyses (6R)-5,10-methylene-5,6,7,8-tetrahydrofolate + NADP(+) = (6R)-5,10-methenyltetrahydrofolate + NADPH. It carries out the reaction (6R)-5,10-methenyltetrahydrofolate + H2O = (6R)-10-formyltetrahydrofolate + H(+). It functions in the pathway one-carbon metabolism; tetrahydrofolate interconversion. Catalyzes the oxidation of 5,10-methylenetetrahydrofolate to 5,10-methenyltetrahydrofolate and then the hydrolysis of 5,10-methenyltetrahydrofolate to 10-formyltetrahydrofolate. The protein is Bifunctional protein FolD of Parafrankia sp. (strain EAN1pec).